Consider the following 215-residue polypeptide: Cytochrome b6 (215 aa).

A helical membrane pass occupies residues 32 to 52 (IFYCFGGITFTCFLVQVATGF). C35 is a heme c binding site. Heme b contacts are provided by H86 and H100. 3 consecutive transmembrane segments (helical) span residues 90 to 110 (ASMM…TGGF), 116 to 136 (LTWV…VTGY), and 186 to 206 (LHTF…FLMI). 2 residues coordinate heme b: H187 and H202.

Belongs to the cytochrome b family. PetB subfamily. In terms of assembly, the 4 large subunits of the cytochrome b6-f complex are cytochrome b6, subunit IV (17 kDa polypeptide, PetD), cytochrome f and the Rieske protein, while the 4 small subunits are PetG, PetL, PetM and PetN. The complex functions as a dimer. Heme b is required as a cofactor. It depends on heme c as a cofactor.

It is found in the plastid. The protein resides in the chloroplast thylakoid membrane. Its function is as follows. Component of the cytochrome b6-f complex, which mediates electron transfer between photosystem II (PSII) and photosystem I (PSI), cyclic electron flow around PSI, and state transitions. The protein is Cytochrome b6 of Auxenochlorella protothecoides (Green microalga).